The sequence spans 103 residues: Large ribosomal subunit protein bL21 (103 aa).

It belongs to the bacterial ribosomal protein bL21 family. In terms of assembly, part of the 50S ribosomal subunit. Contacts protein L20.

Functionally, this protein binds to 23S rRNA in the presence of protein L20. The polypeptide is Large ribosomal subunit protein bL21 (Aliivibrio fischeri (strain ATCC 700601 / ES114) (Vibrio fischeri)).